A 192-amino-acid chain; its full sequence is Elongation factor P (192 aa).

The segment at Glu133–Ser157 is disordered.

The protein belongs to the elongation factor P family.

It is found in the cytoplasm. The protein operates within protein biosynthesis; polypeptide chain elongation. In terms of biological role, involved in peptide bond synthesis. Stimulates efficient translation and peptide-bond synthesis on native or reconstituted 70S ribosomes in vitro. Probably functions indirectly by altering the affinity of the ribosome for aminoacyl-tRNA, thus increasing their reactivity as acceptors for peptidyl transferase. The protein is Elongation factor P of Salinibacter ruber (strain DSM 13855 / M31).